Here is a 613-residue protein sequence, read N- to C-terminus: MNSPGGRGKKKGSAGSSSAPPAAGASPSAPSGPAPPAPPAGAAAAAAASPHKRNLYYFSYPLFAAFALLRFVAFQLGLLVAWLCERLSRGALMAAKSSRAGDAPEPGGAAERVRACHKRAFECISMALRIDEDERAGQKEQAVEWYKKGIEELERGIAVLVVGQGDQCERARRLQSKMMTNLAMAKDRLQLLEKLQADLQISKPQMEVYNDSTNLACRNGHLQSESGAVPKKKDPLTHTSNSLPRSKTVAKTGSTGLSGHHRTPSYSGISTASVSRPAANPATSTHKAAPKNSRTNKPSTPTPAARKKKDTKVFRNVDSNLANLILNEIVDSGPAVKFDDIAGQELAKQALQEIVILPSLRPELFTGLRAPARGLLLFGPPGNGKTMLAKAVAAESNATFFNISAASLTSKYVGEGEKLVRALFAVARELQPSIIFIDEVDSLLCERREGEHDASRRLKTEFLIEFDGVQSSGEDRILVMGATNRPQELDDAVLRRFTKRVYVSLPNEETRLILLKNLLSKQGSPLTQKELAQLARMTDGYSGSDLTALAKDAALGPIRELKPEQVKNMSASEMRNIKLSDFTESLKKIKRSLSPQTLEAYIRWNKDFGDTTV.

Residues 1-42 form a disordered region; sequence MNSPGGRGKKKGSAGSSSAPPAAGASPSAPSGPAPPAPPAGA. The Cytoplasmic portion of the chain corresponds to 1-61; sequence MNSPGGRGKK…KRNLYYFSYP (61 aa). The span at 13-29 shows a compositional bias: low complexity; it reads SAGSSSAPPAAGASPSA. Positions 30–39 are enriched in pro residues; sequence PSGPAPPAPP. An intramembrane region (helical) is located at residues 62–82; that stretch reads LFAAFALLRFVAFQLGLLVAW. Residues 83 to 613 are Cytoplasmic-facing; sequence LCERLSRGAL…WNKDFGDTTV (531 aa). The MIT domain occupies 117–192; sequence HKRAFECISM…AMAKDRLQLL (76 aa). Residues 224 to 312 are disordered; it reads SESGAVPKKK…PAARKKKDTK (89 aa). Composition is skewed to polar residues over residues 237-257, 264-274, and 281-299; these read THTS…STGL, PSYSGISTASV, and PATS…NKPS. 379–386 lines the ATP pocket; it reads GPPGNGKT.

Belongs to the AAA ATPase family. Spastin subfamily. As to quaternary structure, homohexamer. The homohexamer is stabilized by ATP-binding. The homohexamer may adopt a ring conformation through which microtubules pass prior to being severed. Interacts with microtubules.

Its subcellular location is the membrane. The protein localises to the cytoplasm. It localises to the cytoskeleton. It is found in the microtubule organizing center. The protein resides in the centrosome. Its subcellular location is the perinuclear region. The protein localises to the nucleus. The enzyme catalyses n ATP + n H2O + a microtubule = n ADP + n phosphate + (n+1) alpha/beta tubulin heterodimers.. Its function is as follows. ATP-dependent microtubule severing protein that specifically recognizes and cuts microtubules that are polyglutamylated. Preferentially recognizes and acts on microtubules decorated with short polyglutamate tails: severing activity increases as the number of glutamates per tubulin rises from one to eight, but decreases beyond this glutamylation threshold. Microtubule severing promotes reorganization of cellular microtubule arrays and the release of microtubules from the centrosome following nucleation. Required for membrane traffic from the endoplasmic reticulum (ER) to the Golgi and for completion of the abscission stage of cytokinesis. Also plays a role in axon growth and the formation of axonal branches. This is Spastin from Gallus gallus (Chicken).